A 152-amino-acid polypeptide reads, in one-letter code: Transcription elongation factor Spt5 (152 aa).

The 31-residue stretch at 94-124 folds into the KOW domain; sequence PGDLVEVIAGPFKGQKAKVVKIDESKDEVVV.

It belongs to the archaeal Spt5 family. As to quaternary structure, heterodimer composed of Spt4 and Spt5. Interacts with RNA polymerase (RNAP) independently of nucleic acids. Forms a homodimer in solution.

Functionally, stimulates transcription elongation. In Pyrococcus furiosus (strain ATCC 43587 / DSM 3638 / JCM 8422 / Vc1), this protein is Transcription elongation factor Spt5.